A 199-amino-acid chain; its full sequence is Prolactin-2 (199 aa).

Disulfide bonds link cysteine 4–cysteine 11, cysteine 58–cysteine 174, and cysteine 191–cysteine 199.

It belongs to the somatotropin/prolactin family.

It localises to the secreted. The sequence is that of Prolactin-2 from Crocodylus novaeguineae (Crocodile).